Reading from the N-terminus, the 341-residue chain is GDT1-like protein 1, chloroplastic (341 aa).

The span at 1 to 13 shows a compositional bias: low complexity; sequence MASVASSTVFASS. Disordered regions lie at residues 1 to 41 and 54 to 76; these read MASV…GRSV and VVTR…GGGR. The transit peptide at 1-57 directs the protein to the chloroplast; sequence MASVASSTVFASSLPHHRATTRAPPTPPRIPRRARLPGRSVVSCLPKRGSEKLVVTR. Helical transmembrane passes span 79 to 99, 117 to 137, 158 to 178, 203 to 223, 246 to 266, 286 to 306, and 318 to 338; these read PSLD…VLML, VVGD…LIFF, AIIF…SVVL, FLAA…AASG, GAGI…VFIA, LGVI…AVLG, and IVAY…LVEI.

The protein belongs to the GDT1 family.

Its subcellular location is the plastid. It localises to the chloroplast membrane. The sequence is that of GDT1-like protein 1, chloroplastic from Oryza sativa subsp. japonica (Rice).